A 460-amino-acid polypeptide reads, in one-letter code: Protein btn1 (460 aa).

Helical transmembrane passes span 42–62 (VCVA…VILS), 76–96 (VVLL…PYFI), 105–125 (IIIF…SPPY), 135–155 (LAGI…FVGL), 164–184 (LAAW…AYAL), 195–215 (ATLL…FMVL), 287–307 (GLFF…YTIN), 323–343 (FAHF…GVFI), 356–376 (LYLP…QAVF), 378–398 (FIPS…LGGL), and 428–448 (AAGI…LCDW).

Belongs to the battenin family.

It is found in the vacuole membrane. Involved in vacuolar transport and vacuole pH homeostasis. Also required for cytokinesis. The chain is Protein btn1 (btn1) from Aspergillus fumigatus (strain ATCC MYA-4609 / CBS 101355 / FGSC A1100 / Af293) (Neosartorya fumigata).